The following is a 146-amino-acid chain: Leghemoglobin 1 (146 aa).

Positions 2–146 (GFTAQQDALV…LAAAIKKAMS (145 aa)) constitute a Globin domain. Phosphoserine; by CCAMK occurs at positions 13 and 14. Y30 is modified (nitrated tyrosine). Residues S45 and S55 each carry the phosphoserine; by CCAMK modification. S45 is a binding site for heme b. Residue H61 participates in O2 binding. Heme b is bound by residues K64, H93, and K96. S123 carries the post-translational modification Phosphoserine; by CCAMK. Nitrated tyrosine is present on Y134.

It belongs to the plant globin family. Monomer. Nitrated in effective nodules and particularly in hypoxic conditions; this mechanism may play a protective role in the symbiosis by buffering toxic peroxynitrite NO(2)(-). Nitration level decrease during nodule senescence. In terms of processing, phosphorylated by CCAMK at serine residues in a Ca(2+)-dependent manner; the phosphorylation at Ser-45 disrupts the molecular environment of its porphyrin ring oxygen binding pocket, thus leading to a reduced oxygen consumption and to the delivery of oxygen O(2) to symbiosomes. In terms of tissue distribution, specifically and strongly expressed in root nodules and at low levels in seedlings.

Its subcellular location is the cytoplasm. It is found in the cytosol. The protein resides in the nucleus. Functionally, leghemoglobin that reversibly binds oxygen O(2) through a pentacoordinated heme iron. In root nodules, facilitates the diffusion of oxygen to the bacteroids while preventing the bacterial nitrogenase from being inactivated by buffering dioxygen, nitric oxide and carbon monoxide, and promoting the formation of reactive oxygen species (ROS, e.g. H(2)O(2)). This role is essential for symbiotic nitrogen fixation (SNF). The polypeptide is Leghemoglobin 1 (Lotus japonicus (Lotus corniculatus var. japonicus)).